Consider the following 578-residue polypeptide: Longifolene synthase (578 aa).

Asp331, Asp335, and Asp475 together coordinate Mg(2+). The DDXXD motif signature appears at 331 to 335 (DDLYD).

It belongs to the terpene synthase family. Tpsd subfamily. It depends on Mg(2+) as a cofactor. Mn(2+) is required as a cofactor.

The enzyme catalyses (2E,6E)-farnesyl diphosphate = longifolene + diphosphate. Its pathway is sesquiterpene biosynthesis. The protein operates within terpene metabolism; oleoresin biosynthesis. Terpene synthase (TPS) involved in the biosynthesis of sesquiterpene natural products included in conifer oleoresin secretions and volatile emissions; these compounds contribute to biotic and abiotic stress defense against herbivores and pathogens. Catalyzes the conversion of (2E,6E)-farnesyl diphosphate (FPP) to longifolene. This is Longifolene synthase from Picea engelmannii x Picea glauca (Hybrid white spruce).